Reading from the N-terminus, the 356-residue chain is Cobalt-precorrin-5B C(1)-methyltransferase (356 aa).

Belongs to the CbiD family.

It catalyses the reaction Co-precorrin-5B + S-adenosyl-L-methionine = Co-precorrin-6A + S-adenosyl-L-homocysteine. The protein operates within cofactor biosynthesis; adenosylcobalamin biosynthesis; cob(II)yrinate a,c-diamide from sirohydrochlorin (anaerobic route): step 6/10. Catalyzes the methylation of C-1 in cobalt-precorrin-5B to form cobalt-precorrin-6A. This chain is Cobalt-precorrin-5B C(1)-methyltransferase, found in Geobacter sp. (strain M21).